The primary structure comprises 138 residues: Large ribosomal subunit protein uL16 (138 aa).

It belongs to the universal ribosomal protein uL16 family. In terms of assembly, part of the 50S ribosomal subunit.

Its function is as follows. Binds 23S rRNA and is also seen to make contacts with the A and possibly P site tRNAs. This Paramagnetospirillum magneticum (strain ATCC 700264 / AMB-1) (Magnetospirillum magneticum) protein is Large ribosomal subunit protein uL16.